The primary structure comprises 469 residues: Desmin (469 aa).

Residues 2-107 form a head region; it reads SQAYSSSQRV…QEFLTTRTNE (106 aa). S7 is subject to Phosphoserine; by CDK1. The residue at position 12 (S12) is a Phosphoserine; by AURKB. An Omega-N-methylarginine modification is found at R16. A Phosphothreonine; by AURKB and ROCK1 modification is found at T17. A phosphoserine; by CDK1 mark is found at S28 and S32. R37 bears the Asymmetric dimethylarginine; alternate mark. R37 carries the omega-N-methylarginine; alternate modification. Residue S45 is modified to Phosphoserine. R58 carries the ADP-ribosylarginine modification. S60 bears the Phosphoserine; by AURKB mark. R70 is subject to Omega-N-methylarginine. Phosphothreonine; by ROCK1 is present on T76. At S81 the chain carries Phosphoserine. In terms of domain architecture, IF rod spans 107–415; sequence EKVELQELND…KLLEGEESRI (309 aa). A coil 1A region spans residues 108–140; the sequence is KVELQELNDRFANYIEKVRFLEQQNAALAAEVN. A linker 1 region spans residues 141–150; it reads RLKGREPTRV. The tract at residues 151-251 is coil 1B; the sequence is AEIYEEELRE…HEEEIRELQA (101 aa). The interval 252 to 267 is linker 12; sequence QLQEQQVQVEMDMSKP. Residues 267-414 form an interaction with NEB region; the sequence is PDLTAALRDI…RKLLEGEESR (148 aa). The tract at residues 268–286 is coil 2A; the sequence is DLTAALRDIRAQYETIAAK. The segment at 287–294 is linker 2; the sequence is NISEAEEW. Phosphoserine is present on residues S289, S357, S360, and S423. The interval 295-411 is coil 2B; sequence YKSKVSDLTQ…ATYRKLLEGE (117 aa). A tail region spans residues 412-469; sequence ESRINLPIQTYSALNFRETSPEQRGSEVHTKKTVMIKTIETRDGEVVSEATQQQHEVL. The interval 437-452 is interaction with CRYAB; it reads SEVHTKKTVMIKTIET.

This sequence belongs to the intermediate filament family. Homomer. Interacts with DST. Interacts with MTM1. Interacts with EPPK1; interaction is dependent of higher-order structure of intermediate filament. Interacts with CRYAB. Interacts with NEB (via nebulin repeats 160-164). Interacts (via rod region) with NEBL (via nebulin repeats 1-5). Interacts with ASB2; the interaction targets DES for proteasomal degradation. Interacts with PKP1. Interacts with FLII. Post-translationally, ADP-ribosylation prevents ability to form intermediate filaments. Phosphorylation at Ser-7, Ser-28 and Ser-32 by CDK1, phosphorylation at Ser-60 by AURKB and phosphorylation at Thr-76 by ROCK1 contribute to efficient separation of desmin intermediate filaments during mitosis. In terms of processing, ubiquitination by a SCF-like complex containing ASB2 leads to proteasomal degradation.

The protein localises to the cytoplasm. It is found in the myofibril. Its subcellular location is the sarcomere. The protein resides in the z line. It localises to the cell membrane. The protein localises to the sarcolemma. It is found in the nucleus. Its subcellular location is the cell tip. The protein resides in the nucleus envelope. Its function is as follows. Muscle-specific type III intermediate filament essential for proper muscular structure and function. Plays a crucial role in maintaining the structure of sarcomeres, inter-connecting the Z-disks and forming the myofibrils, linking them not only to the sarcolemmal cytoskeleton, but also to the nucleus and mitochondria, thus providing strength for the muscle fiber during activity. In adult striated muscle they form a fibrous network connecting myofibrils to each other and to the plasma membrane from the periphery of the Z-line structures. May act as a sarcomeric microtubule-anchoring protein: specifically associates with detyrosinated tubulin-alpha chains, leading to buckled microtubules and mechanical resistance to contraction. Required for nuclear membrane integrity, via anchoring at the cell tip and nuclear envelope, resulting in maintenance of microtubule-derived intracellular mechanical forces. Contributes to the transcriptional regulation of the NKX2-5 gene in cardiac progenitor cells during a short period of cardiomyogenesis and in cardiac side population stem cells in the adult. Plays a role in maintaining an optimal conformation of nebulette (NEB) on heart muscle sarcomeres to bind and recruit cardiac alpha-actin. The protein is Desmin (DES) of Canis lupus familiaris (Dog).